An 84-amino-acid chain; its full sequence is ORF8b protein (84 aa).

The SARS ORF8 Ig-like domain maps to 1-82 (MCLKILVRYN…RDVLVVLNKR (82 aa)). An intrachain disulfide couples Cys22 to Cys40.

Its subcellular location is the host cytoplasm. The protein localises to the host nucleus. Its function is as follows. Non-structural protein which is dispensable for virus replication in cell culture. The protein is ORF8b protein of Severe acute respiratory syndrome coronavirus (SARS-CoV).